The chain runs to 124 residues: Small ribosomal subunit protein uS12 (124 aa).

Positions 1–25 are disordered; that stretch reads MATINQLVRKPRQATTYKSASPALD. D89 carries the post-translational modification 3-methylthioaspartic acid.

It belongs to the universal ribosomal protein uS12 family. Part of the 30S ribosomal subunit. Contacts proteins S8 and S17. May interact with IF1 in the 30S initiation complex.

Its function is as follows. With S4 and S5 plays an important role in translational accuracy. Interacts with and stabilizes bases of the 16S rRNA that are involved in tRNA selection in the A site and with the mRNA backbone. Located at the interface of the 30S and 50S subunits, it traverses the body of the 30S subunit contacting proteins on the other side and probably holding the rRNA structure together. The combined cluster of proteins S8, S12 and S17 appears to hold together the shoulder and platform of the 30S subunit. The protein is Small ribosomal subunit protein uS12 of Xanthomonas campestris pv. campestris (strain 8004).